The sequence spans 702 residues: MA3 DOMAIN-CONTAINING TRANSLATION REGULATORY FACTOR 3 (702 aa).

Positions 1 to 100 (MEGFLTDQQR…PNDPNYDSGE (100 aa)) are disordered. Basic residues predominate over residues 53 to 65 (VKHRRSHAGRSIR). The segment covering 81–91 (IDTDGDYHIDP) has biased composition (basic and acidic residues). Residues 116–237 (DYKKAAASII…PPAFLPRAAK (122 aa)) form the MI 1 domain. The Nuclear localization signal 1 signature appears at 267 to 274 (ERRWGGQT). MI domains follow at residues 280–401 (EVKK…PSGE), 414–535 (RFKE…EISS), and 577–697 (DAKD…SLTE). Residues 615–622 (VKKALVMG) carry the Nuclear localization signal 2 motif.

This sequence belongs to the PDCD4 family. Interacts with EIN2, ETR2 and EIN4. Binds to EIF4A1. The association with ribosomes is modulated by cellular energy status and TOR activity. In terms of tissue distribution, mostly expressed in vegetative tissues, such as leaves and stems, and, to a lower extent, in roots and reproductive tissues, such as flower buds and flowers. Expressed in seedlings, roots, cauline leaf tips and flowers.

The protein localises to the nucleus. It is found in the cytoplasm. The protein resides in the cytosol. Involved in target of rapamycin (TOR)-regulated translation control, especially under energy-deficient conditions. Involved in the regulation of the ethylene-mediated signaling pathway. Involved in salt stress responses. Reduced cotyledons size and early flowering. The chain is MA3 DOMAIN-CONTAINING TRANSLATION REGULATORY FACTOR 3 from Arabidopsis thaliana (Mouse-ear cress).